Here is a 1706-residue protein sequence, read N- to C-terminus: Brefeldin A-inhibited guanine nucleotide-exchange protein 4 (1706 aa).

The SEC7 domain occupies 555–742; the sequence is MLEQRRAYKI…GSLYDRVVKE (188 aa). The active site involves glutamate 657.

As to quaternary structure, homodimer.

The protein resides in the cytoplasm. The protein localises to the cytosol. It localises to the membrane. With respect to regulation, inhibited by brefeldin A. Activates the ARF proteins by exchanging bound GDP for free GTP. Plays a role in vesicular protein sorting. This chain is Brefeldin A-inhibited guanine nucleotide-exchange protein 4 (BIG4), found in Arabidopsis thaliana (Mouse-ear cress).